Reading from the N-terminus, the 130-residue chain is ER membrane protein complex subunit 5 (130 aa).

Over 1–3 (MAS) the chain is Cytoplasmic. The helical transmembrane segment at 4–22 (SFWKGVVGIGLFALAHAAF) threads the bilayer. Over 23–43 (SAAQHRSYMRLTEKENETLPI) the chain is Lumenal. A helical membrane pass occupies residues 44 to 63 (DIVLQTLLSFVITCYGIVHI). Topologically, residues 64–130 (SGEFKDMDAS…LRLRKLENFH (67 aa)) are cytoplasmic.

This sequence belongs to the membrane magnesium transporter (TC 1.A.67) family. In terms of assembly, component of the ER membrane protein complex (EMC).

It localises to the endoplasmic reticulum membrane. It is found in the golgi apparatus membrane. Its subcellular location is the early endosome membrane. Part of the endoplasmic reticulum membrane protein complex (EMC) that enables the energy-independent insertion into endoplasmic reticulum membranes of newly synthesized membrane proteins. Preferentially accommodates proteins with transmembrane domains that are weakly hydrophobic or contain destabilizing features such as charged and aromatic residues. Involved in the cotranslational insertion of multi-pass membrane proteins in which stop-transfer membrane-anchor sequences become ER membrane spanning helices. It is also required for the post-translational insertion of tail-anchored/TA proteins in endoplasmic reticulum membranes. By mediating the proper cotranslational insertion of N-terminal transmembrane domains in an N-exo topology, with translocated N-terminus in the lumen of the ER, controls the topology of multi-pass membrane proteins like the G protein-coupled receptors. By regulating the insertion of various proteins in membranes, it is indirectly involved in many cellular processes. May be involved in Mg(2+) transport. The chain is ER membrane protein complex subunit 5 from Danio rerio (Zebrafish).